The following is a 55-amino-acid chain: Large ribosomal subunit protein bL33 (55 aa).

The protein belongs to the bacterial ribosomal protein bL33 family.

The protein is Large ribosomal subunit protein bL33 of Kocuria rhizophila (strain ATCC 9341 / DSM 348 / NBRC 103217 / DC2201).